Here is a 520-residue protein sequence, read N- to C-terminus: Zinc finger and BTB domain-containing protein 45 (520 aa).

The 64-residue stretch at 33 to 96 (CDVTVRIREA…LYSGSLVVAQ (64 aa)) folds into the BTB domain. 2 disordered regions span residues 182–272 (PAPP…GGAG) and 337–372 (FHLGAPGPPAPTPPTPSGPAPAPPPTFYPTLQPDAA). Acidic residues predominate over residues 206 to 225 (RGEEDDDEETDEETDAEEGE). The span at 342 to 363 (PGPPAPTPPTPSGPAPAPPPTF) shows a compositional bias: pro residues. 4 consecutive C2H2-type zinc fingers follow at residues 412 to 434 (YECSHCRKTFSSRKNYTKHMFIH), 440 to 462 (HQCAVCWRSFSLRDYLLKHMVTH), 468 to 490 (FQCAVCAKRFTQKSSLNVHMRTH), and 495 to 517 (APCPACGKVFSHRALLERHLAAH).

It belongs to the krueppel C2H2-type zinc-finger protein family.

Its subcellular location is the nucleus. Its function is as follows. May be involved in transcriptional regulation. In the central nervous system, may play a role in glial cell differentiation. The protein is Zinc finger and BTB domain-containing protein 45 of Mus musculus (Mouse).